The chain runs to 273 residues: Large ribosomal subunit protein uL2 (273 aa).

Disordered regions lie at residues 28–53 (KPFAPLLEKNSKSGGRNNNGRITTRH) and 221–273 (RGTA…RRSK). Low complexity predominate over residues 39–48 (KSGGRNNNGR). An N6-acetyllysine modification is found at Lys242.

The protein belongs to the universal ribosomal protein uL2 family. As to quaternary structure, part of the 50S ribosomal subunit. Forms a bridge to the 30S subunit in the 70S ribosome.

Functionally, one of the primary rRNA binding proteins. Required for association of the 30S and 50S subunits to form the 70S ribosome, for tRNA binding and peptide bond formation. It has been suggested to have peptidyltransferase activity; this is somewhat controversial. Makes several contacts with the 16S rRNA in the 70S ribosome. This is Large ribosomal subunit protein uL2 from Escherichia coli (strain SE11).